The following is a 452-amino-acid chain: Cobyrinate a,c-diamide synthase (452 aa).

Residues 248–441 (RVAYALDAAF…LHIHFYQNLL (194 aa)) form the GATase cobBQ-type domain. C330 functions as the Nucleophile in the catalytic mechanism.

It belongs to the CobB/CbiA family. Requires Mg(2+) as cofactor.

The catalysed reaction is cob(II)yrinate + 2 L-glutamine + 2 ATP + 2 H2O = cob(II)yrinate a,c diamide + 2 L-glutamate + 2 ADP + 2 phosphate + 2 H(+). The protein operates within cofactor biosynthesis; adenosylcobalamin biosynthesis; cob(II)yrinate a,c-diamide from sirohydrochlorin (anaerobic route): step 10/10. Functionally, catalyzes the ATP-dependent amidation of the two carboxylate groups at positions a and c of cobyrinate, using either L-glutamine or ammonia as the nitrogen source. This is Cobyrinate a,c-diamide synthase from Listeria monocytogenes serotype 4b (strain F2365).